Here is a 429-residue protein sequence, read N- to C-terminus: Serine--tRNA ligase (429 aa).

236–238 (TAE) provides a ligand contact to L-serine. 267 to 269 (RRE) contributes to the ATP binding site. Glu290 lines the L-serine pocket. 354–357 (EISS) is a binding site for ATP. Ser390 contributes to the L-serine binding site.

This sequence belongs to the class-II aminoacyl-tRNA synthetase family. Type-1 seryl-tRNA synthetase subfamily. Homodimer. The tRNA molecule binds across the dimer.

It localises to the cytoplasm. The enzyme catalyses tRNA(Ser) + L-serine + ATP = L-seryl-tRNA(Ser) + AMP + diphosphate + H(+). The catalysed reaction is tRNA(Sec) + L-serine + ATP = L-seryl-tRNA(Sec) + AMP + diphosphate + H(+). It participates in aminoacyl-tRNA biosynthesis; selenocysteinyl-tRNA(Sec) biosynthesis; L-seryl-tRNA(Sec) from L-serine and tRNA(Sec): step 1/1. Its function is as follows. Catalyzes the attachment of serine to tRNA(Ser). Is also able to aminoacylate tRNA(Sec) with serine, to form the misacylated tRNA L-seryl-tRNA(Sec), which will be further converted into selenocysteinyl-tRNA(Sec). This is Serine--tRNA ligase from Gloeobacter violaceus (strain ATCC 29082 / PCC 7421).